We begin with the raw amino-acid sequence, 318 residues long: NADH-ubiquinone oxidoreductase chain 1 (318 aa).

8 consecutive transmembrane segments (helical) span residues 2 to 22 (FMIN…FLTL), 68 to 88 (ISMF…MWTP), 100 to 120 (LGVL…LWSG), 146 to 166 (LAII…PTLI), 171 to 191 (HMWL…STLA), 222 to 242 (LFFL…TILF), 253 to 273 (ELYT…FLWV), and 293 to 313 (FLPL…ITAG).

The protein belongs to the complex I subunit 1 family. As to quaternary structure, core subunit of respiratory chain NADH dehydrogenase (Complex I) which is composed of 45 different subunits.

It localises to the mitochondrion inner membrane. The enzyme catalyses a ubiquinone + NADH + 5 H(+)(in) = a ubiquinol + NAD(+) + 4 H(+)(out). Core subunit of the mitochondrial membrane respiratory chain NADH dehydrogenase (Complex I) which catalyzes electron transfer from NADH through the respiratory chain, using ubiquinone as an electron acceptor. Essential for the catalytic activity and assembly of complex I. The polypeptide is NADH-ubiquinone oxidoreductase chain 1 (MT-ND1) (Hipposideros diadema (Diadem leaf-nosed bat)).